The primary structure comprises 532 residues: O-phosphoserine--tRNA(Cys) ligase (532 aa).

Residues 188 to 190, 233 to 235, 275 to 276, and asparagine 327 each bind substrate; these read HMT, SAS, and YY.

It belongs to the class-II aminoacyl-tRNA synthetase family. O-phosphoseryl-tRNA(Cys) synthetase subfamily. Homotetramer. Interacts with SepCysS.

It catalyses the reaction tRNA(Cys) + O-phospho-L-serine + ATP = O-phospho-L-seryl-tRNA(Cys) + AMP + diphosphate. Functionally, catalyzes the attachment of O-phosphoserine (Sep) to tRNA(Cys). This Methanocella arvoryzae (strain DSM 22066 / NBRC 105507 / MRE50) protein is O-phosphoserine--tRNA(Cys) ligase.